Reading from the N-terminus, the 493-residue chain is NAD(P)H dehydrogenase (quinone) (493 aa).

Residues 12-13, 35-37, 42-43, K52, G117, D317, 324-325, and Y450 contribute to the FAD site; these read PA, DCD, AA, and LA.

It belongs to the class-I pyridine nucleotide-disulfide oxidoreductase family. Homotetramer. It depends on FAD as a cofactor.

It carries out the reaction a quinone + NADH + H(+) = a quinol + NAD(+). The enzyme catalyses a quinone + NADPH + H(+) = a quinol + NADP(+). May contribute to virulence by increasing resistance to reactive oxygen intermediates. It can reduce 2,6-dimethyl-1,4-benzoquinone (DMBQ), 5-hydroxy-1,4-naphthaquinone (5-HNQ) and menadione. The protein is NAD(P)H dehydrogenase (quinone) (lpdA) of Mycobacterium tuberculosis (strain CDC 1551 / Oshkosh).